Reading from the N-terminus, the 361-residue chain is Hsc70-interacting protein (361 aa).

The interval 39–98 (GGTIPPAPASTSTDETSKGKAEEQPEEPVKSPEPESEESDLEIDNEGVIEPDNDDPQEMG) is disordered. Basic and acidic residues predominate over residues 53–71 (ETSKGKAEEQPEEPVKSPE). Residues 72–98 (PESEESDLEIDNEGVIEPDNDDPQEMG) are compositionally biased toward acidic residues. TPR repeat units follow at residues 112–145 (ANEK…NPCL), 147–179 (ILYA…NPDS), and 181–213 (QTYK…DYDE). The span at 254–270 (KAREEHERAQREEEARR) shows a compositional bias: basic and acidic residues. Residues 254–292 (KAREEHERAQREEEARRQAGGAQFGGFPGGFPGGFPGAM) are disordered. Residues 275 to 292 (AQFGGFPGGFPGGFPGAM) show a composition bias toward gly residues. One can recognise an STI1 domain in the interval 311 to 350 (DPEVLAAMQDPEVMAAFQDVAQNPANMSKYQNNPKVMSLI).

Belongs to the FAM10 family. Homotetramer. Interacts with HSC70 as well as DNAJ homologs and HSP90.

Its subcellular location is the cytoplasm. One HIP oligomer binds the ATPase domains of at least two HSC70 molecules dependent on activation of the HSC70 ATPase by HSP40. Stabilizes the ADP state of HSC70 that has a high affinity for substrate protein. Through its own chaperone activity, it may contribute to the interaction of HSC70 with various target proteins. The polypeptide is Hsc70-interacting protein (ST13) (Gallus gallus (Chicken)).